The chain runs to 1010 residues: Peroxisome proliferator-activated receptor gamma coactivator 1-beta (1010 aa).

Residues 1 to 91 are abolishes DNA transcriptional activity when missing; sequence MAGNDCGALL…FFQIDSENEA (91 aa). Residues 115–134 are disordered; it reads GLDEGDTPSCTPASPAPLSV. Positions 140–144 match the LXXLL motif 1 motif; sequence LERLL. A phosphoserine mark is found at S145 and S148. The LXXLL motif 2 motif lies at 156-160; that stretch reads LQKLL. Disordered stretches follow at residues 165–214, 227–282, and 306–329; these read SPTA…RPCT, PRGK…QVPK, and PQRASEPIPQSCSSPLRKVPPRSR. Composition is skewed to polar residues over residues 178 to 189 and 264 to 279; these read TWSQTSLSSRSQ and PQDSLGQDTANPNSAQ. Positions 342–346 match the LXXLL motif 3 motif; that stretch reads LRELL. Residues 369-384 are compositionally biased toward polar residues; it reads TPQSRTRPPKDSQASP. Disordered stretches follow at residues 369–475, 517–567, and 590–674; these read TPQS…VCPV, GLTD…CLML, and GTAG…QKRP. The residue at position 383 (S383) is a Phosphoserine. Over residues 411–428 the composition is skewed to basic and acidic residues; the sequence is LRLEVKRDVNKPARQKRE. Over residues 429-449 the composition is skewed to acidic residues; the sequence is EDEEEEEEEEEEEEKEDEEEE. A compositionally biased stretch (low complexity) spans 521–532; it reads SSQGQQLPLGSQ. Positions 604–618 are enriched in basic and acidic residues; the sequence is PMEEDPFKQDTKHSP. 2 stretches are compositionally biased toward polar residues: residues 619–638 and 659–670; these read GQDTAPSLPSPETLQLTATP and QHATTQPVSQAG. At S628 the chain carries Phosphoserine. The HCFC1-binding-motif (HBM) motif lies at 681–684; it reads DHDY. 2 disordered regions span residues 714–744 and 778–881; these read HQGATLPVETKTPRREADQNCDPTPKDSMQL and DTVF…KKRR. Residues 782–794 are compositionally biased toward low complexity; the sequence is EDSSSSSGESSFL. A compositionally biased stretch (acidic residues) spans 795-811; it reads LEEEEEEGGEEDDEGED. Residues 832–852 are compositionally biased toward low complexity; sequence SRQLCSRSRSSSGSSSCSSWS. The RRM domain maps to 889 to 963; sequence RVVYIRNLSG…RNEPSFHLSY (75 aa).

As to quaternary structure, interacts with estrogen receptor alpha/ESR1. Interacts with Sterol regulatory binding transcription factor 1/SREBF1, PPAR-alpha/PPARA, thyroid hormone receptor beta/THRB and host cell factor/HCFC1. Interacts with Estrogen-related receptor gamma/ESRRG and alpha/ESRRA. Interacts with PRDM16. Ubiquitous with higher expression in heart, brown adipose tissue.

The protein localises to the nucleus. In terms of biological role, plays a role of stimulator of transcription factors and nuclear receptors activities. Activates transcriptional activity of estrogen receptor alpha, nuclear respiratory factor 1 (NRF1) and glucocorticoid receptor in the presence of glucocorticoids. May play a role in constitutive non-adrenergic-mediated mitochondrial biogenesis as suggested by increased basal oxygen consumption and mitochondrial number when overexpressed. May be part of the pathways regulating the elevation of gluconeogenesis, beta-oxidation of fatty acids and ketogenesis during fasting. Stimulates SREBP-mediated lipogenic gene expression in the liver. Induces energy expenditure and antagonizes obesity when overexpressed. Also induces the expression of mitochondrial genes involved in oxidative metabolism. Induces the expression of PERM1 in the skeletal muscle in an ESRRA-dependent manner. The protein is Peroxisome proliferator-activated receptor gamma coactivator 1-beta (Ppargc1b) of Rattus norvegicus (Rat).